A 940-amino-acid polypeptide reads, in one-letter code: Lysine-specific demethylase 7A (940 aa).

The PHD-type zinc finger occupies 37-88 (PVYCVCRQPYDVNRFMIECDVCKDWFHGSCVGVEEHHAVDIDLYHCPDCAAL). The segment at 97-114 (RRNWHRHDYTEVDDGSKP) is linker. Positions 230-386 (FSDTKMSELV…MQLRCYEMEK (157 aa)) constitute a JmjC domain. T279 provides a ligand contact to substrate. 2 residues coordinate Fe cation: H282 and D284. K299 is a binding site for substrate. Residue H354 coordinates Fe cation. 5 disordered regions span residues 483–509 (VKSQ…HSRR), 599–670 (LYTA…PDCT), 710–729 (SQKP…TSTS), 818–854 (NAQD…SSSI), and 876–920 (SPER…MATA). S604 carries the post-translational modification Phosphoserine. Polar residues predominate over residues 613–623 (TQNANMKTEQS). The segment covering 714–724 (SRQEIPVKREC) has biased composition (basic and acidic residues).

The protein belongs to the JHDM1 histone demethylase family. JHDM1D subfamily. Fe(2+) serves as cofactor.

It localises to the nucleus. It carries out the reaction N(6),N(6)-dimethyl-L-lysyl(9)-[histone H3] + 2 2-oxoglutarate + 2 O2 = L-lysyl(9)-[histone H3] + 2 formaldehyde + 2 succinate + 2 CO2. It catalyses the reaction N(6),N(6)-dimethyl-L-lysyl(27)-[histone H3] + 2 2-oxoglutarate + 2 O2 = L-lysyl(27)-[histone H3] + 2 formaldehyde + 2 succinate + 2 CO2. The enzyme catalyses N(6),N(6)-dimethyl-L-lysyl(36)-[histone H3] + 2-oxoglutarate + O2 = N(6)-methyl-L-lysyl(36)-[histone H3] + formaldehyde + succinate + CO2. The catalysed reaction is N(6)-methyl-L-lysyl(20)-[histone H4] + 2-oxoglutarate + O2 = L-lysyl(20)-[histone H4] + formaldehyde + succinate + CO2. In terms of biological role, histone demethylase required for brain development. Specifically demethylates dimethylated 'Lys-9', 'Lys-27' and 'Lys-36' (H3K9me2, H3K27me2, H3K36me2, respectively) of histone H3 and monomethylated histone H4 'Lys-20' residue (H4K20Me1), thereby playing a central role in histone code. Specifically binds trimethylated 'Lys-4' of histone H3 (H3K4me3), affecting histone demethylase specificity: in presence of H3K4me3, it has no demethylase activity toward H3K9me2, while it has high activity toward H3K27me2. Demethylates H3K9me2 in absence of H3K4me3. Has activity toward H4K20Me1 only when nucleosome is used as a substrate and when not histone octamer is used as substrate. This is Lysine-specific demethylase 7A (Kdm7a) from Mus musculus (Mouse).